Reading from the N-terminus, the 168-residue chain is uncharacterized protein (168 aa).

The N-acetyltransferase domain occupies 14 to 168 (IDIPLLDAAS…EYKHWIYVTK (155 aa)).

The protein belongs to the acetyltransferase family.

This is an uncharacterized protein from Bacillus subtilis (strain 168).